Reading from the N-terminus, the 569-residue chain is Toxin YxiD (569 aa).

The LXG domain maps to 1–235 (MKTLDVHALH…NPQMKQADDS (235 aa)). Residues 8–91 (ALHEGIQHTI…QHAISSVESN (84 aa)) are a coiled coil. The interval 548-569 (HQAGIHGTGSPANELFKGGKKK) is disordered.

It in the N-terminal section; belongs to the LXG family. As to quaternary structure, probably interacts with cognate immunity protein YxxD but not with non-cognate immunity proteins. The interaction inhibits the toxic activity of YxxD.

The protein localises to the secreted. In terms of biological role, toxic component of one of 6 LXG toxin-immunity modules in this strain. They promote kin selection, mediate competition in biofilms, and drive spatial segregation of different strains, indicating that LXG toxins may help avoid warfare between strains in biofilms. Mediates intercellular competition during biofilm formation; disruption of the operon disadvantages the bacteria, but overexpression of the cognate immunity protein restores growth in competition with wild-type. Overexpression alone in situ causes growth arrest but not cell lysis, a large decrease in chromosomal DNA content and the production of anucleate cells. No effect is seen on rRNA. Co-overexpression with cognate immunity protein YxxD does not cause growth arrest. The toxic effect is not dependent on the epsA and tapA operons which are required for biofilm formation. The chain is Toxin YxiD (yxiD) from Bacillus subtilis (strain 168).